Consider the following 166-residue polypeptide: Endoribonuclease YbeY (166 aa).

Zn(2+)-binding residues include His129, His133, and His139.

The protein belongs to the endoribonuclease YbeY family. Zn(2+) serves as cofactor.

It is found in the cytoplasm. Single strand-specific metallo-endoribonuclease involved in late-stage 70S ribosome quality control and in maturation of the 3' terminus of the 16S rRNA. This is Endoribonuclease YbeY from Heliobacterium modesticaldum (strain ATCC 51547 / Ice1).